The following is a 273-amino-acid chain: 2,3,4,5-tetrahydropyridine-2,6-dicarboxylate N-succinyltransferase (273 aa).

Arg104 and Asp141 together coordinate substrate.

It belongs to the transferase hexapeptide repeat family. As to quaternary structure, homotrimer.

It localises to the cytoplasm. It carries out the reaction (S)-2,3,4,5-tetrahydrodipicolinate + succinyl-CoA + H2O = (S)-2-succinylamino-6-oxoheptanedioate + CoA. It participates in amino-acid biosynthesis; L-lysine biosynthesis via DAP pathway; LL-2,6-diaminopimelate from (S)-tetrahydrodipicolinate (succinylase route): step 1/3. The polypeptide is 2,3,4,5-tetrahydropyridine-2,6-dicarboxylate N-succinyltransferase (Neisseria meningitidis serogroup C (strain 053442)).